A 282-amino-acid chain; its full sequence is 2-dehydro-3-deoxyphosphooctonate aldolase (282 aa).

This sequence belongs to the KdsA family.

Its subcellular location is the cytoplasm. It catalyses the reaction D-arabinose 5-phosphate + phosphoenolpyruvate + H2O = 3-deoxy-alpha-D-manno-2-octulosonate-8-phosphate + phosphate. It participates in carbohydrate biosynthesis; 3-deoxy-D-manno-octulosonate biosynthesis; 3-deoxy-D-manno-octulosonate from D-ribulose 5-phosphate: step 2/3. The protein operates within bacterial outer membrane biogenesis; lipopolysaccharide biosynthesis. This chain is 2-dehydro-3-deoxyphosphooctonate aldolase, found in Shewanella sp. (strain MR-4).